Reading from the N-terminus, the 518-residue chain is Putative malate dehydrogenase 1B (518 aa).

This sequence belongs to the LDH/MDH superfamily. MDH type 2 family.

The polypeptide is Putative malate dehydrogenase 1B (MDH1B) (Homo sapiens (Human)).